Consider the following 557-residue polypeptide: Vanadium-dependent bromoperoxidase (557 aa).

Gln1 is modified (pyrrolidone carboxylic acid). The segment at 1–22 is disordered; it reads QTCSTSDDADDPTPPNERDDEA. Cys77 and Cys86 are joined by a disulfide. Residues Lys341 and Arg349 each contribute to the vanadate site. His411 is an active-site residue. The vanadate site is built by Ser416, Gly417, and His418. Residue His418 is part of the active site. Residues Cys441 and Cys462 are joined by a disulfide bond. Arg480 and His486 together coordinate vanadate. Cys544 and Cys555 form a disulfide bridge.

It belongs to the vanadium-dependent haloperoxidase family. As to quaternary structure, homodimer; disulfide-linked. Requires vanadate as cofactor.

The catalysed reaction is RH + Br(-) + H2O2 = RBr + 2 H2O.. Its function is as follows. Catalyzes the halogenation of organic substrates in the presence of hydrogen peroxide. This chain is Vanadium-dependent bromoperoxidase, found in Ascophyllum nodosum (Knotted wrack).